Consider the following 1373-residue polypeptide: DNA-directed RNA polymerase subunit beta'' (1373 aa).

4 residues coordinate Zn(2+): C224, C296, C303, and C306.

Belongs to the RNA polymerase beta' chain family. RpoC2 subfamily. In terms of assembly, in plastids the minimal PEP RNA polymerase catalytic core is composed of four subunits: alpha, beta, beta', and beta''. When a (nuclear-encoded) sigma factor is associated with the core the holoenzyme is formed, which can initiate transcription. Zn(2+) is required as a cofactor.

The protein localises to the plastid. The protein resides in the chloroplast. It catalyses the reaction RNA(n) + a ribonucleoside 5'-triphosphate = RNA(n+1) + diphosphate. In terms of biological role, DNA-dependent RNA polymerase catalyzes the transcription of DNA into RNA using the four ribonucleoside triphosphates as substrates. This Amborella trichopoda protein is DNA-directed RNA polymerase subunit beta''.